Reading from the N-terminus, the 601-residue chain is Elongation factor 4 (601 aa).

A tr-type G domain is found at 5-187 (IRKKNFCIIA…AICKYVPSPK (183 aa)). Residues 17 to 22 (DHGKST) and 134 to 137 (NKID) contribute to the GTP site.

Belongs to the TRAFAC class translation factor GTPase superfamily. Classic translation factor GTPase family. LepA subfamily.

It is found in the cell inner membrane. It catalyses the reaction GTP + H2O = GDP + phosphate + H(+). Required for accurate and efficient protein synthesis under certain stress conditions. May act as a fidelity factor of the translation reaction, by catalyzing a one-codon backward translocation of tRNAs on improperly translocated ribosomes. Back-translocation proceeds from a post-translocation (POST) complex to a pre-translocation (PRE) complex, thus giving elongation factor G a second chance to translocate the tRNAs correctly. Binds to ribosomes in a GTP-dependent manner. The chain is Elongation factor 4 from Borreliella afzelii (strain PKo) (Borrelia afzelii).